The chain runs to 175 residues: Cytochrome c homolog (175 aa).

The Cytoplasmic portion of the chain corresponds to 1 to 8 (MSGKELNK). A helical; Signal-anchor transmembrane segment spans residues 9 to 29 (IVAAILFASLIAMMVGFVANI). Residues 30 to 175 (LYKPTLELQH…LFLKTYVHDK (146 aa)) lie on the Periplasmic side of the membrane. Heme c-binding residues include C84, C87, H88, and M150.

The protein belongs to the cytochrome c family. Binds 1 heme c group covalently per subunit.

The protein localises to the cell membrane. Functionally, may be involved in electron transfer from bc1 complex to aa3. This Rickettsia felis (strain ATCC VR-1525 / URRWXCal2) (Rickettsia azadi) protein is Cytochrome c homolog (cycM).